The following is a 1153-amino-acid chain: MEGKKKRPLFFLLVLLLSHKANNVLFERMKGILLLECENEYVKNENGYKLATGHHYMDNDQIERWLQGTDRSRRVKIEENVKYKYNVEELNTKYEQTKGKRINRILKESTYEAQNVADNNYIDDKANGEYKTDNKTNKGEGARNMVMLDYDISGSGHPDGIIDNVVELGTEDEGNFLENSSKGGDHPYRMNRKERMCSGVINQTFLQKNVMRRCNNKRKRGTRDWDCPTKKDVCIPDRRYQLCMKELTNLVNNTKTHSHNDITFLKLNLKEKLTYDAAVEGDLLLKKYNNVYSEDLCKDIKWSLEDFGDIIMGTDMEGIGYSQVVENNLRTVFGTGTKTQLDRKKWWNESKKYIWEATILSVKKKLNGYSAWNCKEDVQINVEPQIYRWIREWGMDYMSELPKEQRKIKEKCDRKLYYTNLRICTMSPCNDSCKLYDQWITRKKKQWDVLSTKFSSVKKGQIIETENITTAYDILKQELNGFNEVMFENEINKRDNVYIDICLCAADEPNKNTQEHLKKLKSAPKLETQRSHSTIQPMSSSGAEKVQGDLAHGNINDAAYKSTTDEAAKGDGQNGNQTVAESNIKGTDNIENEAAKNVDTYKFVTERSADTRGATDITETGEEKLNTSYSGSSEITVKENIPGDGIVKDVSAAVENSENPLETKHKIFEPSKDNSDNSENSGSMEFKATSSNPITEAVESSSAEGQVQEDSAHRSVNTGRDNSTISAATSDDGLSSGDKRVESLTSIENADDGGDPVQGSLWNLLNDPSVGAGGGKSHIKTEENEGSQAEIDGKNVDIAEQRTATITEVQPERPDLSDTDNGNVPRSGNKQNEGATALSGAESLESNESVHKTIDNTTHGLENKNGGNEKDFQKHDFMNNDMLNDQTSSDQTSSDQTSSNQTSSDQTSSNQTSSDQTSSDQISSDQTSSDQTSSNQTSSDQTIDTEEHHRDNVRNPEIKSSEDMSKGDFMRNSNSNELYSHNNLNNRKLNIDQYEHRDVKATREKIILMSEVNKCNNRASLKYCNTIEDRMLSSTCSRERSKNLCCSISDFCLNYFELYPYEFYNCMKKEFEDSSYECFTKGSSTGIGIVYFATGGAFLIILLLFVSKNVASNDYEEEATFDEFVEYSDDIHRTPLMPNHIEHMQQFTPLDYS.

The N-terminal stretch at 1 to 21 is a signal peptide; that stretch reads MEGKKKRPLFFLLVLLLSHKA. The Extracellular segment spans residues 22–1085; sequence NNVLFERMKG…YECFTKGSST (1064 aa). Asparagine 134, asparagine 179, and asparagine 202 each carry an N-linked (GlcNAc...) asparagine glycan. Intrachain disulfides connect cysteine 214–cysteine 243 and cysteine 227–cysteine 234. Asparagine 252 and asparagine 348 each carry an N-linked (GlcNAc...) asparagine glycan. 4 cysteine pairs are disulfide-bonded: cysteine 297-cysteine 374, cysteine 412-cysteine 429, cysteine 424-cysteine 504, and cysteine 433-cysteine 502. N-linked (GlcNAc...) asparagine glycosylation is found at asparagine 430 and asparagine 467. 4 disordered regions span residues 520–545, 565–591, 612–631, and 655–981; these read LKSA…GAEK, DEAA…DNIE, RGAT…SYSG, and ENSE…LYSH. 2 stretches are compositionally biased toward polar residues: residues 531 to 542 and 574 to 586; these read SHSTIQPMSSSG and NGNQ…NIKG. Asparagine 576 and asparagine 626 each carry an N-linked (GlcNAc...) asparagine glycan. The span at 661–675 shows a compositional bias: basic and acidic residues; sequence LETKHKIFEPSKDNS. Residues 677 to 733 are compositionally biased toward polar residues; it reads NSENSGSMEFKATSSNPITEAVESSSAEGQVQEDSAHRSVNTGRDNSTISAATSDDG. An N-linked (GlcNAc...) asparagine glycan is attached at asparagine 722. The span at 791–800 shows a compositional bias: basic and acidic residues; it reads IDGKNVDIAE. Residues 819 to 834 are compositionally biased toward polar residues; the sequence is TDNGNVPRSGNKQNEG. Residues asparagine 847 and asparagine 856 are each glycosylated (N-linked (GlcNAc...) asparagine). Residues 867–878 are compositionally biased toward basic and acidic residues; it reads GNEKDFQKHDFM. Low complexity predominate over residues 884-942; that stretch reads NDQTSSDQTSSDQTSSNQTSSDQTSSNQTSSDQTSSDQISSDQTSSDQTSSNQTSSDQT. 3 N-linked (GlcNAc...) asparagine glycosylation sites follow: asparagine 900, asparagine 910, and asparagine 935. A compositionally biased stretch (basic and acidic residues) spans 945 to 969; that stretch reads TEEHHRDNVRNPEIKSSEDMSKGDF. Polar residues predominate over residues 971–981; the sequence is RNSNSNELYSH. The chain crosses the membrane as a helical span at residues 1086-1106; that stretch reads GIGIVYFATGGAFLIILLLFV. Over 1107–1153 the chain is Cytoplasmic; sequence SKNVASNDYEEEATFDEFVEYSDDIHRTPLMPNHIEHMQQFTPLDYS.

It is found in the membrane. Functionally, binds to Neu5Gc-sialylated receptors on macaque erythrocytes. The sequence is that of Duffy receptor beta form from Plasmodium knowlesi.